The following is a 405-amino-acid chain: L-rhamnonate dehydratase (405 aa).

Residues histidine 33 and arginine 59 each coordinate substrate. Mg(2+)-binding residues include aspartate 226, glutamate 252, and glutamate 280. Histidine 329 acts as the Proton acceptor in catalysis. Glutamate 349 is a binding site for substrate.

It belongs to the mandelate racemase/muconate lactonizing enzyme family. RhamD subfamily. Homooctamer; tetramer of dimers. It depends on Mg(2+) as a cofactor.

It catalyses the reaction L-rhamnonate = 2-dehydro-3-deoxy-L-rhamnonate + H2O. In terms of biological role, catalyzes the dehydration of L-rhamnonate to 2-keto-3-deoxy-L-rhamnonate (KDR). This chain is L-rhamnonate dehydratase, found in Salmonella typhi.